The sequence spans 404 residues: tRNA (carboxymethyluridine(34)-5-O)-methyltransferase (404 aa).

Ser238 bears the Phosphoserine mark.

As to quaternary structure, interacts with TRM112A and TRM112B.

The enzyme catalyses 5-(carboxymethyl)uridine(34) in tRNA + S-adenosyl-L-methionine = 5-(2-methoxy-2-oxoethyl)uridine(34) in tRNA + S-adenosyl-L-homocysteine. Its function is as follows. Catalyzes the methylation of 5-carboxymethyl uridine to 5-methylcarboxymethyl uridine at the wobble position of the anticodon loop in tRNA via its methyltransferase domain. Catalyzes the last step in the formation of 5-methylcarboxymethyl uridine at the wobble position of the anticodon loop in target tRNA. The polypeptide is tRNA (carboxymethyluridine(34)-5-O)-methyltransferase (Arabidopsis thaliana (Mouse-ear cress)).